The chain runs to 292 residues: Aquaporin-3 (292 aa).

Residues 1-24 (MGRQKELMNRCGEMLHIRYRLLRQ) lie on the Cytoplasmic side of the membrane. A helical membrane pass occupies residues 25-42 (ALAECLGTLILVMFGCGS). At 43–56 (VAQVVLSRGTHGGF) the chain is on the extracellular side. Residues 57 to 74 (LTINLAFGFAVTLAILVA) form a helical membrane-spanning segment. Topologically, residues 75-78 (GQVS) are cytoplasmic. The segment at residues 79-92 (GAHLNPAVTFAMCF) is an intramembrane region (discontinuously helical). The NPA 1 signature appears at 83-85 (NPA). Topologically, residues 93-100 (LAREPWIK) are cytoplasmic. A helical membrane pass occupies residues 101–121 (LPIYTLAQTLGAFLGAGIVFG). Residues 122-159 (LYYDAIWAFAGNELVVSGPNGTAGIFATYPSGHLDMVN) are Extracellular-facing. N141 carries N-linked (GlcNAc...) asparagine glycosylation. Residues 160–177 (GFFDQFIGTAALIVCVLA) traverse the membrane as a helical segment. The Cytoplasmic segment spans residues 178 to 189 (IVDPYNNPVPRG). The helical transmembrane segment at 190–206 (LEAFTVGLVVLVIGTSM) threads the bilayer. Residues 207 to 210 (GFNS) lie on the Extracellular side of the membrane. The segment at residues 211 to 224 (GYAVNPARDFGPRL) is an intramembrane region (discontinuously helical). Residues 215–217 (NPA) carry the NPA 2 motif. Residues 225 to 242 (FTALAGWGSEVFTTGQNW) lie on the Extracellular side of the membrane. A helical transmembrane segment spans residues 243–264 (WWVPIVSPLLGSIGGVFVYQLM). Topologically, residues 265-292 (IGCHLEQPPPSTEAENVKLAHMKHKEQI) are cytoplasmic.

This sequence belongs to the MIP/aquaporin (TC 1.A.8) family. In terms of assembly, homotetramer; each monomer provides an independent glycerol/water pore. Could also exist in other oligomeric states. As to expression, detected in kidney medulla and papilla, in collecting duct cells. Detected in colon.

It localises to the cell membrane. The protein localises to the basolateral cell membrane. The catalysed reaction is glycerol(in) = glycerol(out). It carries out the reaction H2O(in) = H2O(out). It catalyses the reaction urea(in) = urea(out). The enzyme catalyses H2O2(out) = H2O2(in). Channel activity is inhibited by mercury ions. Aquaglyceroporins form homotetrameric transmembrane channels, with each monomer independently mediating glycerol and water transport across the plasma membrane along their osmotic gradient. Could also be permeable to urea. Also participates in cell permeability to H2O2 and H2O2-mediated signaling. In skin, transports glycerol to the epidermis and stratum corneum, where it maintains hydration, elasticity, and supports lipid biosynthesis for barrier repair. In kidney, contributes to the reabsorption of water, helping the body maintain proper fluid balance. The sequence is that of Aquaporin-3 from Rattus norvegicus (Rat).